The following is a 112-amino-acid chain: UPF0329 protein ECU11_0080 (112 aa).

Belongs to the UPF0329 family.

The protein is UPF0329 protein ECU11_0080 of Encephalitozoon cuniculi (strain GB-M1) (Microsporidian parasite).